Consider the following 267-residue polypeptide: Hydroxyethylthiazole kinase 2 (267 aa).

Methionine 41 lines the substrate pocket. ATP-binding residues include lysine 116 and threonine 166. Glycine 193 is a binding site for substrate.

Belongs to the Thz kinase family. The cofactor is Mg(2+).

It carries out the reaction 5-(2-hydroxyethyl)-4-methylthiazole + ATP = 4-methyl-5-(2-phosphooxyethyl)-thiazole + ADP + H(+). Its pathway is cofactor biosynthesis; thiamine diphosphate biosynthesis; 4-methyl-5-(2-phosphoethyl)-thiazole from 5-(2-hydroxyethyl)-4-methylthiazole: step 1/1. Its function is as follows. Catalyzes the phosphorylation of the hydroxyl group of 4-methyl-5-beta-hydroxyethylthiazole (THZ). This is Hydroxyethylthiazole kinase 2 from Streptococcus pneumoniae (strain JJA).